The chain runs to 589 residues: Serine/threonine-protein kinase PknJ (589 aa).

The Cytoplasmic portion of the chain corresponds to Met1–Arg342. In terms of domain architecture, Protein kinase spans Tyr14–Ala276. Residues Leu20–Val28 and Lys43 each bind ATP. Asp136 acts as the Proton acceptor in catalysis. The helical transmembrane segment at Gly343 to Met363 threads the bilayer. At Thr364–Gly589 the chain is on the extracellular side. Residues Ser365 to Thr387 show a composition bias toward low complexity. Positions Ser365–Pro400 are disordered.

It belongs to the protein kinase superfamily. Ser/Thr protein kinase family. Homodimer.

Its subcellular location is the cell membrane. The enzyme catalyses L-seryl-[protein] + ATP = O-phospho-L-seryl-[protein] + ADP + H(+). It carries out the reaction L-threonyl-[protein] + ATP = O-phospho-L-threonyl-[protein] + ADP + H(+). The polypeptide is Serine/threonine-protein kinase PknJ (pknJ) (Mycobacterium bovis (strain ATCC BAA-935 / AF2122/97)).